The primary structure comprises 823 residues: ATP-dependent RNA helicase HrpA (823 aa).

The region spanning 16 to 179 is the Helicase ATP-binding domain; that stretch reads IKVLKNHNVL…FNNAPVVSIE (164 aa). 29-36 provides a ligand contact to ATP; it reads SPTGSGKT. Positions 126 to 129 match the DEAH box motif; the sequence is DEAH. Residues 203-374 enclose the Helicase C-terminal domain; it reads KIKEIVLNVI…EVVLRMADIG (172 aa).

It belongs to the DEAD box helicase family. DEAH subfamily.

The catalysed reaction is ATP + H2O = ADP + phosphate + H(+). In terms of biological role, has RNA-stimulated ATPase activity and RNA helicase activity. Involved in global regulation of gene expression. Could be involved in RNA processing and post-transcriptional gene regulation. Essential for both tick transmission and mouse infection. The polypeptide is ATP-dependent RNA helicase HrpA (Borreliella burgdorferi (strain ATCC 35210 / DSM 4680 / CIP 102532 / B31) (Borrelia burgdorferi)).